Here is a 960-residue protein sequence, read N- to C-terminus: Endoplasmic reticulum aminopeptidase 2 (960 aa).

At 1-20 (MFHSSAMVNSHRKPMFNIHR) the chain is on the cytoplasmic side. Residues 21–40 (GFYCLTAILPQICICSQFSV) traverse the membrane as a helical; Signal-anchor for type II membrane protein segment. Over 41–960 (PSSYHFTEDP…TLRTWLMVNT (920 aa)) the chain is Lumenal. Residues Asn-85 and Asn-119 are each glycosylated (N-linked (GlcNAc...) asparagine). Glu-200 contacts substrate. A glycan (N-linked (GlcNAc...) asparagine) is linked at Asn-219. 334-338 (GAMEN) serves as a coordination point for substrate. Zn(2+) is bound at residue His-370. Residue Glu-371 is the Proton acceptor of the active site. Positions 374 and 393 each coordinate Zn(2+). Asn-405 carries N-linked (GlcNAc...) asparagine glycosylation. A disulfide bridge links Cys-421 with Cys-460. Asn-650 carries N-linked (GlcNAc...) asparagine glycosylation. Residues Cys-759 and Cys-766 are joined by a disulfide bond.

This sequence belongs to the peptidase M1 family. In terms of assembly, heterodimer with ERAP1. The cofactor is Zn(2+). In terms of processing, N-glycosylated. Ubiquitously expressed. Highly expressed in spleen and leukocytes.

It is found in the endoplasmic reticulum membrane. Functionally, aminopeptidase that plays a central role in peptide trimming, a step required for the generation of most HLA class I-binding peptides. Peptide trimming is essential to customize longer precursor peptides to fit them to the correct length required for presentation on MHC class I molecules. Preferentially hydrolyzes the basic residues Arg and Lys. This Homo sapiens (Human) protein is Endoplasmic reticulum aminopeptidase 2 (ERAP2).